The chain runs to 224 residues: Charged multivesicular body protein 4b (224 aa).

The segment at 1 to 23 (MSVFGKLFGAGGGKAGKGGPTPQ) is disordered. Residue Ser2 is modified to N-acetylserine. Lys6 carries the post-translational modification N6-acetyllysine. Residues 8 to 19 (FGAGGGKAGKGG) show a composition bias toward gly residues. Residues 23–183 (QEAIQRLRDT…EELDKNLLEI (161 aa)) are a coiled coil. An N6-acetyllysine modification is found at Lys114. Residues Ser184 and Ser223 each carry the phosphoserine modification. The interval 185–224 (GPETVPLPNVPSIALPSKPAKKKEEEDDDMKELENWAGSM) is disordered.

The protein belongs to the SNF7 family. In terms of assembly, probable core component of the endosomal sorting required for transport complex III (ESCRT-III). ESCRT-III components are thought to multimerize to form a flat lattice on the perimeter membrane of the endosome. Several assembly forms of ESCRT-III may exist that interact and act sequentially. Interacts with CHMP6 and CHMP4C. Interacts with PDCD6IP; the interaction is direct. Interacts with VPS4A; the interaction is direct. Interacts with VPS4B; the interaction is direct. Interacts with CHMP7. Interacts with CFTR; the interaction requires misfolded CFTR. Interacts with PTPN23. Interacts with CC2D1B. ISGylated. Isgylation weakens its interaction with VPS4A. As to expression, widely expressed. Expressed at higher level in heart and skeletal muscle. Also expressed in brain, colon, thymus, spleen, kidney, liver, small intestine, placenta, lung and peripheral blood lymphocytes.

It localises to the cytoplasm. It is found in the cytosol. The protein localises to the late endosome membrane. The protein resides in the midbody. Its subcellular location is the nucleus envelope. In terms of biological role, probable core component of the endosomal sorting required for transport complex III (ESCRT-III) which is involved in multivesicular bodies (MVBs) formation and sorting of endosomal cargo proteins into MVBs. MVBs contain intraluminal vesicles (ILVs) that are generated by invagination and scission from the limiting membrane of the endosome and mostly are delivered to lysosomes enabling degradation of membrane proteins, such as stimulated growth factor receptors, lysosomal enzymes and lipids. The MVB pathway appears to require the sequential function of ESCRT-O, -I,-II and -III complexes. ESCRT-III proteins mostly dissociate from the invaginating membrane before the ILV is released. The ESCRT machinery also functions in topologically equivalent membrane fission events, such as the terminal stages of cytokinesis. Together with SPAST, the ESCRT-III complex promotes nuclear envelope sealing and mitotic spindle disassembly during late anaphase. Plays a role in the endosomal sorting pathway. ESCRT-III proteins are believed to mediate the necessary vesicle extrusion and/or membrane fission activities, possibly in conjunction with the AAA ATPase VPS4. When overexpressed, membrane-assembled circular arrays of CHMP4B filaments can promote or stabilize negative curvature and outward budding. CHMP4A/B/C are required for the exosomal release of SDCBP, CD63 and syndecan. Majority of the protein exists in a folded closed conformation. Functionally, (Microbial infection) The ESCRT machinery also functions in topologically equivalent membrane fission events, such as the budding of enveloped viruses (HIV-1 and other lentiviruses). Via its interaction with PDCD6IP involved in HIV-1 p6- and p9-dependent virus release. In Homo sapiens (Human), this protein is Charged multivesicular body protein 4b (CHMP4B).